Reading from the N-terminus, the 593-residue chain is MSASQGNVFTRGLSRISRRKKKTKSIQNSLVSEQQPSFDAAIVPMPIPNDKSSIFSKGMDRLRRSLRLPKKRRDRSHDRHLSPDVTGGSKTEQWQPDEGAVRTGTCCFNVKYLGSVEVYESRGMQVCEGALKSLKASRRKPVKAVLYVSGDGLRVVDQGNSRGLLVDQTIEKVSFCAPDRQTDKGFAYICRDGASRRWMCHGFLATKETGERLSHAVGCAFSICLEKKKRRDEETAQVNVQSAQESTSSTPPKDIFHPNWEDNTSEGTSTQNPSNSRSNLAYQSFRKHVSIEDRYLDPQSVIINEVPASNHMDEIRRISKPRPTGNPALFLRQGSLRAPPDMPSSSDQFKRNMSLRTVSNNPTERSPEKKSFGTQLYNEPIYEGDEDPLGLGITPPVVTKTSGSLSNNGLDGINLNWKSIPAPVHQMQQHNANGDFVAAWPQNTIEKPTVGPLDKLQKQFEDIKLISISSGENTPTTRSKADEWLDDVLRVSMSMSPTSPSSDPPSTSSYSVLPKSGPPPAHAPPPLPVRQAVSNGSPSIYQQQLQQANSTRNSPAGINWNSSPNPMKISQPPAKPVDPFDVQWSRLAVNNTH.

4 disordered regions span residues 1–97 (MSAS…WQPD), 235–278 (TAQV…NSRS), 331–375 (LRQG…FGTQ), and 493–581 (MSMS…DPFD). Phosphoserine; by PKC is present on Ser17. Residues 27–37 (QNSLVSEQQPS) show a composition bias toward polar residues. Over residues 64–74 (RSLRLPKKRRD) the composition is skewed to basic residues. At Ser65 the chain carries Phosphoserine; by PKC. The PID domain occupies 102–255 (RTGTCCFNVK…STSSTPPKDI (154 aa)). Composition is skewed to polar residues over residues 236–251 (AQVN…SSTP), 261–278 (EDNT…NSRS), and 354–364 (SLRTVSNNPTE). The segment covering 493–511 (MSMSPTSPSSDPPSTSSYS) has biased composition (low complexity). The span at 516-528 (SGPPPAHAPPPLP) shows a compositional bias: pro residues. Polar residues predominate over residues 532–565 (AVSNGSPSIYQQQLQQANSTRNSPAGINWNSSPN).

As to quaternary structure, interacts with pkc-3. As to expression, expressed in cells comprising the intestine, pharyngeal cells, the anal sphincter and depressor muscles.

It is found in the cytoplasm. The protein resides in the cell cortex. It localises to the cytoskeleton. Its subcellular location is the membrane. Functionally, involved in the tethering and targeting of pkc-3 to modulate the intracellular distribution of the kinase. The complex formed with pkc-3 complexes are likely to be involved in assembly, maintenance, and/or regulation of protein complexes that execute asymmetric and/or polarized cell functions. This is Numb-related protein 1 from Caenorhabditis elegans.